The chain runs to 134 residues: Lymphocyte antigen 6F (134 aa).

An N-terminal signal peptide occupies residues 1-26 (MDSCHTTKSCVLILLVVLLCAERAQG). A UPAR/Ly6 domain is found at 27–119 (LECYNCLGVS…TGGSTWTMTR (93 aa)). Disulfide bonds link Cys29/Cys53, Cys32/Cys41, Cys46/Cys74, Cys78/Cys98, and Cys99/Cys104. The GPI-anchor amidated glycine moiety is linked to residue Gly112. The propeptide at 113 to 134 (STWTMTRVLLLNLGSVFLQTLL) is removed in mature form.

The protein localises to the cell membrane. This chain is Lymphocyte antigen 6F (Ly6f), found in Mus musculus (Mouse).